Consider the following 352-residue polypeptide: Photosystem II protein D1 (352 aa).

Threonine 2 is subject to N-acetylthreonine. Threonine 2 is subject to Phosphothreonine. Helical transmembrane passes span 29–46 (YIGW…TATS), 118–133 (HFLL…EWEL), and 142–156 (WIAV…AASA). Histidine 118 is a chlorophyll a binding site. Tyrosine 126 contacts pheophytin a. [CaMn4O5] cluster contacts are provided by aspartate 170 and glutamate 189. Residues 197–218 (FHMLGVAGVFGGSLFSAMHGSL) form a helical membrane-spanning segment. Residue histidine 198 coordinates chlorophyll a. A quinone is bound by residues histidine 215 and 264 to 265 (SF). Histidine 215 lines the Fe cation pocket. Fe cation is bound at residue histidine 272. A helical membrane pass occupies residues 274–288 (FLAAWPVIGIWFTAL). The [CaMn4O5] cluster site is built by histidine 332, glutamate 333, aspartate 342, and alanine 344. The propeptide occupies 345–352 (STNSSSNN).

This sequence belongs to the reaction center PufL/M/PsbA/D family. In terms of assembly, PSII is composed of 1 copy each of membrane proteins PsbA, PsbB, PsbC, PsbD, PsbE, PsbF, PsbH, PsbI, PsbJ, PsbK, PsbL, PsbM, PsbT, PsbX, PsbY, PsbZ, Psb30/Ycf12, at least 3 peripheral proteins of the oxygen-evolving complex and a large number of cofactors. It forms dimeric complexes. Requires The D1/D2 heterodimer binds P680, chlorophylls that are the primary electron donor of PSII, and subsequent electron acceptors. It shares a non-heme iron and each subunit binds pheophytin, quinone, additional chlorophylls, carotenoids and lipids. D1 provides most of the ligands for the Mn4-Ca-O5 cluster of the oxygen-evolving complex (OEC). There is also a Cl(-1) ion associated with D1 and D2, which is required for oxygen evolution. The PSII complex binds additional chlorophylls, carotenoids and specific lipids. as cofactor. In terms of processing, tyr-161 forms a radical intermediate that is referred to as redox-active TyrZ, YZ or Y-Z. Post-translationally, C-terminally processed by CTPA; processing is essential to allow assembly of the oxygen-evolving complex and thus photosynthetic growth.

The protein resides in the plastid. Its subcellular location is the chloroplast thylakoid membrane. It carries out the reaction 2 a plastoquinone + 4 hnu + 2 H2O = 2 a plastoquinol + O2. Its function is as follows. This is one of the two reaction center proteins of photosystem II. Photosystem II (PSII) is a light-driven water:plastoquinone oxidoreductase that uses light energy to abstract electrons from H(2)O, generating O(2) and a proton gradient subsequently used for ATP formation. It consists of a core antenna complex that captures photons, and an electron transfer chain that converts photonic excitation into a charge separation. The D1/D2 (PsbA/PsbD) reaction center heterodimer binds P680, the primary electron donor of PSII as well as several subsequent electron acceptors. This Chlamydomonas reinhardtii (Chlamydomonas smithii) protein is Photosystem II protein D1.